The following is a 100-amino-acid chain: Urease subunit gamma (100 aa).

This sequence belongs to the urease gamma subunit family. In terms of assembly, heterotrimer of UreA (gamma), UreB (beta) and UreC (alpha) subunits. Three heterotrimers associate to form the active enzyme.

It is found in the cytoplasm. The enzyme catalyses urea + 2 H2O + H(+) = hydrogencarbonate + 2 NH4(+). The protein operates within nitrogen metabolism; urea degradation; CO(2) and NH(3) from urea (urease route): step 1/1. The protein is Urease subunit gamma of Saccharopolyspora erythraea (strain ATCC 11635 / DSM 40517 / JCM 4748 / NBRC 13426 / NCIMB 8594 / NRRL 2338).